Consider the following 102-residue polypeptide: Large ribosomal subunit protein bL21 (102 aa).

It belongs to the bacterial ribosomal protein bL21 family. Part of the 50S ribosomal subunit. Contacts protein L20.

This protein binds to 23S rRNA in the presence of protein L20. The protein is Large ribosomal subunit protein bL21 of Solidesulfovibrio magneticus (strain ATCC 700980 / DSM 13731 / RS-1) (Desulfovibrio magneticus).